Here is a 200-residue protein sequence, read N- to C-terminus: MAKVLVLYYSSYGHVETMAQHIVEGAKSVPGVEVTLKRVPETIPVDQARAIGVKVDQAAPVATVDELADYDAIIFGTPTRFGNMAGQMRTFLDQTGGLWMKGALVGKIGSVFASTGTQHGGQETTITSFHTTLLHHGMVIVGVPYACSGLVNMNEITGGTPYGATTLAGADGSRQPSANELDIARYQGKHVAELASKLAS.

Residues 4–191 (VLVLYYSSYG…DIARYQGKHV (188 aa)) form the Flavodoxin-like domain. Residues 10-15 (SSYGHV) and 79-81 (TRF) each bind FMN. Tyr12 serves as a coordination point for NAD(+). Residue Trp99 coordinates substrate. FMN contacts are provided by residues 114–120 (STGTQHG) and His135.

The protein belongs to the WrbA family. FMN is required as a cofactor.

The catalysed reaction is a quinone + NADH + H(+) = a quinol + NAD(+). It carries out the reaction a quinone + NADPH + H(+) = a quinol + NADP(+). This chain is NAD(P)H dehydrogenase (quinone), found in Burkholderia orbicola (strain MC0-3).